The primary structure comprises 628 residues: Beta-galactosidase large subunit (628 aa).

Residue E468 is the Proton donor of the active site. E536 serves as the catalytic Nucleophile.

This sequence belongs to the glycosyl hydrolase 2 family. Heterodimer of a large (LacL) and a small subunit (LacM).

The enzyme catalyses Hydrolysis of terminal non-reducing beta-D-galactose residues in beta-D-galactosides.. Component of a beta-galactosidase. This chain is Beta-galactosidase large subunit, found in Lactobacillus helveticus (Lactobacillus suntoryeus).